The chain runs to 135 residues: Nucleoside diphosphate kinase (135 aa).

The ATP site is built by Lys-11, Phe-59, Arg-87, Thr-93, Arg-104, and Asn-114. Residue His-117 is the Pros-phosphohistidine intermediate of the active site.

Belongs to the NDK family. As to quaternary structure, homotetramer. Mg(2+) serves as cofactor.

Its subcellular location is the cytoplasm. It catalyses the reaction a 2'-deoxyribonucleoside 5'-diphosphate + ATP = a 2'-deoxyribonucleoside 5'-triphosphate + ADP. The enzyme catalyses a ribonucleoside 5'-diphosphate + ATP = a ribonucleoside 5'-triphosphate + ADP. Functionally, major role in the synthesis of nucleoside triphosphates other than ATP. The ATP gamma phosphate is transferred to the NDP beta phosphate via a ping-pong mechanism, using a phosphorylated active-site intermediate. This Marinomonas sp. (strain MWYL1) protein is Nucleoside diphosphate kinase.